The chain runs to 198 residues: NAD(P)H-quinone oxidoreductase chain 6 (198 aa).

A run of 5 helical transmembrane segments spans residues 9 to 29 (YISF…VVLL), 32 to 52 (IVYS…IYIL), 61 to 81 (AQVL…IMLV), 100 to 120 (TALV…ITPW), and 145 to 165 (LLPF…AIIL).

This sequence belongs to the complex I subunit 6 family.

The protein resides in the membrane. It carries out the reaction a plastoquinone + NADH + (n+1) H(+)(in) = a plastoquinol + NAD(+) + n H(+)(out). It catalyses the reaction a plastoquinone + NADPH + (n+1) H(+)(in) = a plastoquinol + NADP(+) + n H(+)(out). In terms of biological role, NDH-1 shuttles electrons from NAD(P)H, via FMN and iron-sulfur (Fe-S) centers, to quinones in the respiratory chain. The immediate electron acceptor for the enzyme in this species is believed to be plastoquinone. Couples the redox reaction to proton translocation (for every two electrons transferred, four hydrogen ions are translocated across the cytoplasmic membrane), and thus conserves the redox energy in a proton gradient. In Synechocystis sp. (strain ATCC 27184 / PCC 6803 / Kazusa), this protein is NAD(P)H-quinone oxidoreductase chain 6 (ndhG).